Here is a 455-residue protein sequence, read N- to C-terminus: tRNA-2-methylthio-N(6)-dimethylallyladenosine synthase (455 aa).

Positions 10–130 constitute an MTTase N-terminal domain; it reads RKVFIKTYGC…LPDALKRVRR (121 aa). [4Fe-4S] cluster contacts are provided by C19, C55, C93, C171, C175, and C178. Residues 157–389 form the Radical SAM core domain; the sequence is RSRGVTAFLT…QALLLRQQKE (233 aa). In terms of domain architecture, TRAM spans 392–454; that stretch reads ESLVGKTMDV…PNSLFAEVAG (63 aa).

This sequence belongs to the methylthiotransferase family. MiaB subfamily. In terms of assembly, monomer. The cofactor is [4Fe-4S] cluster.

The protein resides in the cytoplasm. It carries out the reaction N(6)-dimethylallyladenosine(37) in tRNA + (sulfur carrier)-SH + AH2 + 2 S-adenosyl-L-methionine = 2-methylsulfanyl-N(6)-dimethylallyladenosine(37) in tRNA + (sulfur carrier)-H + 5'-deoxyadenosine + L-methionine + A + S-adenosyl-L-homocysteine + 2 H(+). In terms of biological role, catalyzes the methylthiolation of N6-(dimethylallyl)adenosine (i(6)A), leading to the formation of 2-methylthio-N6-(dimethylallyl)adenosine (ms(2)i(6)A) at position 37 in tRNAs that read codons beginning with uridine. The sequence is that of tRNA-2-methylthio-N(6)-dimethylallyladenosine synthase from Agrobacterium fabrum (strain C58 / ATCC 33970) (Agrobacterium tumefaciens (strain C58)).